Consider the following 116-residue polypeptide: Iron-sulfur cluster insertion protein ErpA (116 aa).

The iron-sulfur cluster site is built by C44, C108, and C110.

This sequence belongs to the HesB/IscA family. In terms of assembly, homodimer. Iron-sulfur cluster is required as a cofactor.

Its function is as follows. Required for insertion of 4Fe-4S clusters for at least IspG. In Pseudomonas fluorescens (strain ATCC BAA-477 / NRRL B-23932 / Pf-5), this protein is Iron-sulfur cluster insertion protein ErpA.